We begin with the raw amino-acid sequence, 262 residues long: Ornithine carbamoyltransferase (262 aa).

Residues 3-7 (STRTR), glutamine 30, arginine 54, and 81-84 (HPTQ) each bind carbamoyl phosphate. Residues asparagine 114, aspartate 178, and 182 to 183 (SM) each bind L-ornithine. Carbamoyl phosphate is bound by residues 219 to 222 (HCLP) and threonine 247.

Belongs to the aspartate/ornithine carbamoyltransferase superfamily. OTCase family.

The protein localises to the cytoplasm. The enzyme catalyses carbamoyl phosphate + L-ornithine = L-citrulline + phosphate + H(+). It functions in the pathway amino-acid biosynthesis; L-arginine biosynthesis; L-arginine from L-ornithine and carbamoyl phosphate: step 1/3. Functionally, reversibly catalyzes the transfer of the carbamoyl group from carbamoyl phosphate (CP) to the N(epsilon) atom of ornithine (ORN) to produce L-citrulline. The protein is Ornithine carbamoyltransferase (argF) of Neisseria mucosa.